Reading from the N-terminus, the 392-residue chain is Selenide, water dikinase 1 (392 aa).

Cys31 is a catalytic residue. ATP is bound by residues Lys32, 67-69, Asp87, Asp110, and 161-164; these read GMD and GGQT. Asp69 contacts Mg(2+). Residue Asp110 participates in Mg(2+) binding. Position 265 (Asp265) interacts with Mg(2+). Position 387 is a phosphothreonine (Thr387).

It belongs to the selenophosphate synthase 1 family. Class II subfamily. In terms of assembly, homodimer. The cofactor is Mg(2+).

Its subcellular location is the cell membrane. It is found in the nucleus membrane. The enzyme catalyses hydrogenselenide + ATP + H2O = selenophosphate + AMP + phosphate + 2 H(+). In terms of biological role, synthesizes selenophosphate from selenide and ATP. This chain is Selenide, water dikinase 1 (sephs1), found in Danio rerio (Zebrafish).